Consider the following 163-residue polypeptide: uncharacterized protein (163 aa).

This is an uncharacterized protein from Methanocaldococcus jannaschii (strain ATCC 43067 / DSM 2661 / JAL-1 / JCM 10045 / NBRC 100440) (Methanococcus jannaschii).